Consider the following 243-residue polypeptide: Cell division protein ZipA (243 aa).

The Periplasmic segment spans residues methionine 1–methionine 4. The chain crosses the membrane as a helical span at residues alanine 5–phenylalanine 25. Residues glycine 26 to tryptophan 243 are Cytoplasmic-facing. Residues lysine 30–lysine 89 form a disordered region. The segment covering arginine 35–proline 50 has biased composition (basic and acidic residues).

This sequence belongs to the ZipA family. Interacts with FtsZ via their C-terminal domains.

The protein localises to the cell inner membrane. Essential cell division protein that stabilizes the FtsZ protofilaments by cross-linking them and that serves as a cytoplasmic membrane anchor for the Z ring. Also required for the recruitment to the septal ring of downstream cell division proteins. The polypeptide is Cell division protein ZipA (Xanthomonas euvesicatoria pv. vesicatoria (strain 85-10) (Xanthomonas campestris pv. vesicatoria)).